The following is a 254-amino-acid chain: Imidazole glycerol phosphate synthase subunit HisF (254 aa).

Residues Asp11 and Asp130 contribute to the active site.

Belongs to the HisA/HisF family. In terms of assembly, heterodimer of HisH and HisF.

The protein localises to the cytoplasm. The enzyme catalyses 5-[(5-phospho-1-deoxy-D-ribulos-1-ylimino)methylamino]-1-(5-phospho-beta-D-ribosyl)imidazole-4-carboxamide + L-glutamine = D-erythro-1-(imidazol-4-yl)glycerol 3-phosphate + 5-amino-1-(5-phospho-beta-D-ribosyl)imidazole-4-carboxamide + L-glutamate + H(+). It functions in the pathway amino-acid biosynthesis; L-histidine biosynthesis; L-histidine from 5-phospho-alpha-D-ribose 1-diphosphate: step 5/9. Functionally, IGPS catalyzes the conversion of PRFAR and glutamine to IGP, AICAR and glutamate. The HisF subunit catalyzes the cyclization activity that produces IGP and AICAR from PRFAR using the ammonia provided by the HisH subunit. The polypeptide is Imidazole glycerol phosphate synthase subunit HisF (Halorhodospira halophila (strain DSM 244 / SL1) (Ectothiorhodospira halophila (strain DSM 244 / SL1))).